Reading from the N-terminus, the 551-residue chain is Serendipity locus protein alpha (551 aa).

The protein resides in the cytoplasm. It localises to the cell membrane. Required for the cellularization of the syncytial blastoderm embryo. Involved in the localization of the actin filaments just prior to and during plasma membrane invagination. Sry-alpha together with nullo and bnk may provide auxiliary functions, by acting both to stabilize a large and dynamic microfilament structure and regulate its functions. The polypeptide is Serendipity locus protein alpha (Sry-alpha) (Drosophila pseudoobscura pseudoobscura (Fruit fly)).